A 656-amino-acid polypeptide reads, in one-letter code: Receptor-type tyrosine-protein phosphatase R (656 aa).

The signal sequence occupies residues 1 to 23 (MRRAVGFPALCLLLNLHAAGCFS). A glycan (O-linked (Xyl...) (chondroitin sulfate) serine) is linked at serine 23. The Extracellular portion of the chain corresponds to 25 to 225 (NNDHFLAIRQ…HEADKIWSKE (201 aa)). N-linked (GlcNAc...) asparagine glycosylation occurs at asparagine 128. Residues 226–248 (GFYAVVIFLSIFIIIVTCLMIIY) form a helical membrane-spanning segment. Residues 249 to 656 (RLKERLQLSF…ESRLSPETVQ (408 aa)) are Cytoplasmic-facing. Phosphoserine is present on serine 271. Serine 338 is subject to Phosphoserine; by PKA. In terms of domain architecture, Tyrosine-protein phosphatase spans 392–646 (LQSEFMEIPM…EFVHHALCLF (255 aa)). Substrate-binding positions include aspartate 553, 587–593 (CSAGIGR), and glutamine 631. Cysteine 587 serves as the catalytic Phosphocysteine intermediate.

The protein belongs to the protein-tyrosine phosphatase family. Receptor class 7 subfamily. Interacts with MAPKs. In terms of tissue distribution, widely expressed in the brain, most abundant in cerebellum, midbrain, cerebral cortex and hippocampus. Also expressed in heart and skeletal muscle.

Its subcellular location is the cytoplasm. The protein localises to the cell membrane. The catalysed reaction is O-phospho-L-tyrosyl-[protein] + H2O = L-tyrosyl-[protein] + phosphate. Sequesters mitogen-activated protein kinases (MAPKs) such as MAPK1, MAPK3 and MAPK14 in the cytoplasm in an inactive form. The MAPKs bind to a dephosphorylated kinase interacting motif, phosphorylation of which by the protein kinase A complex releases the MAPKs for activation and translocation into the nucleus. The chain is Receptor-type tyrosine-protein phosphatase R (Ptprr) from Rattus norvegicus (Rat).